Here is a 755-residue protein sequence, read N- to C-terminus: Oligopeptide transporter 1 (755 aa).

Helical transmembrane passes span 58-78 (TWTL…FFGF), 82-102 (QLWV…KLMA), 134-154 (ITIF…ITIV), 165-185 (AAAM…AGIF), 226-246 (FFII…YLFP), 298-318 (FFAI…VLPI), 370-390 (YLSV…CATI), 434-454 (WWFI…CEGF), 462-482 (WWGL…IGVI), 546-566 (FIVQ…TTWW), 614-634 (GIYP…VPFW), 664-684 (AKAV…YYIF), and 697-717 (ILSA…FFAF).

It belongs to the oligopeptide OPT transporter (TC 2.A.67.1) family. In terms of tissue distribution, highly expressed in flowers, and moderately expressed in leaves and stems.

It localises to the membrane. In terms of biological role, involved in the translocation of tetra- and pentapeptides across the cellular membrane in an energy-dependent manner. The polypeptide is Oligopeptide transporter 1 (OPT1) (Arabidopsis thaliana (Mouse-ear cress)).